Reading from the N-terminus, the 180-residue chain is Large ribosomal subunit protein uL5 (180 aa).

The protein belongs to the universal ribosomal protein uL5 family. As to quaternary structure, part of the 50S ribosomal subunit; part of the 5S rRNA/L5/L18/L25 subcomplex. Contacts the 5S rRNA and the P site tRNA. Forms a bridge to the 30S subunit in the 70S ribosome.

Functionally, this is one of the proteins that bind and probably mediate the attachment of the 5S RNA into the large ribosomal subunit, where it forms part of the central protuberance. In the 70S ribosome it contacts protein S13 of the 30S subunit (bridge B1b), connecting the 2 subunits; this bridge is implicated in subunit movement. Contacts the P site tRNA; the 5S rRNA and some of its associated proteins might help stabilize positioning of ribosome-bound tRNAs. In Streptococcus agalactiae serotype Ia (strain ATCC 27591 / A909 / CDC SS700), this protein is Large ribosomal subunit protein uL5.